Reading from the N-terminus, the 87-residue chain is DNA-directed RNA polymerase subunit omega (87 aa).

The protein belongs to the RNA polymerase subunit omega family. The RNAP catalytic core consists of 2 alpha, 1 beta, 1 beta' and 1 omega subunit. When a sigma factor is associated with the core the holoenzyme is formed, which can initiate transcription.

The catalysed reaction is RNA(n) + a ribonucleoside 5'-triphosphate = RNA(n+1) + diphosphate. Its function is as follows. Promotes RNA polymerase assembly. Latches the N- and C-terminal regions of the beta' subunit thereby facilitating its interaction with the beta and alpha subunits. The chain is DNA-directed RNA polymerase subunit omega from Azotobacter vinelandii (strain DJ / ATCC BAA-1303).